The primary structure comprises 1103 residues: MFQLPVNNLGSLRKARKTVKKILSDIGLEYCKEHIEDFKQFEPNDFYLKNTTWEDVGLWDPSLTKNQDYRTKPFCCSACPFSSKFFSAYKSHFRNVHSEDFENRILLNCPYCTFNADKKTLETHIKIFHAPNSSAPSSSLSTFKDKNKNDGLKPKQADNVEQAVYYCKKCTYRDPLYEIVRKHIYREHFQHVAAPYIAKAGEKSLNGAVSLGTNAREECNIHCKRCLFMPKSYEALVQHVIEDHERIGYQVTAMIGHTNVVVPRAKPLMLIAPKPQEKKSMGLPPRISSLASGNVRSLPSQQMVNRLSIPKPNLNSTGVNMMSNVHLQQNNYGVKSVGQSYGVGQSVRLGLGGNAPVSIPQQSQSVKQLLPSGNGRSYGLGAEQRPPAAARYSLQTANTSSLPPGQVKSPSVSQSQASRVLGQSSSKPPPAATGPPPSNHCATQKWKICTICNELFPENVYSVHFEKEHKAEKVPAVANYIMKIHNFTSKCLYCNRYLPTDTLLNHMLIHGLSCPYCRSTFNDVEKMAAHMRMVHIDEEMGPKTDSTLSFDLTLQQGSHTNIHLLVTTYNLRDAPAESVAYHAQNNAPVPPKPQPKVQEKADVPVKSSPQAAVPYKKDVGKTLCPLCFSILKGPISDALAHHLRERHQVIQTVHPVEKKLTYKCIHCLGVYTSNMTASTITLHLVHCRGVGKTQNGQDKTNAPSRLNQSPGLAPVKRTYEQMEFPLLKKRKLEDENDSPGCFEEKPEEPVVLALDPKGHEDDSYEARKSFLTKYFNKQPYPTRREIEKLAASLWLWKSDIASHFSNKRKKCVRDCEKYKPGVLLGFNMKELNKVKHEMDFDAEWLFENHDEKASRVNASKTVDKKLNLGKEDDSFSDSFEHLEEESNGSGGPFDPVFEVEPKIPSDNAEEPVPKVIPEGALESEKLDQKEEEDGSKYETIHLTEERAKLMHDASDSEVDQDDVVEWKDGASPSESGPGSRQVSDFEDNTCEMKPGTWSDESSQSEDARSSKPAAKKKATVQDDTEQLKWKNSSYGKVEGFWSKDQSQWENASENAERLPNPQIEWQNSTIDSEDGEQFDSMTDGVADPMHGSLTGVKLSSQQA.

Residues Lys-39 and Lys-72 each participate in a glycyl lysine isopeptide (Lys-Gly) (interchain with G-Cter in SUMO2) cross-link. The segment at 74–97 adopts a C2H2-type 1; degenerate zinc-finger fold; it reads FCCSACPFSSKFFSAYKSHFRNVH. Position 98 is a phosphoserine (Ser-98). Residues 107 to 129 form a C2H2-type 2; degenerate zinc finger; that stretch reads LNCPYCTFNADKKTLETHIKIFH. The tract at residues 133–154 is disordered; it reads SSAPSSSLSTFKDKNKNDGLKP. Residues 143 to 154 are compositionally biased toward basic and acidic residues; that stretch reads FKDKNKNDGLKP. Residues Lys-144 and Lys-155 each participate in a glycyl lysine isopeptide (Lys-Gly) (interchain with G-Cter in SUMO2) cross-link. The C2H2-type 3; degenerate zinc finger occupies 165–188; it reads YYCKKCTYRDPLYEIVRKHIYREH. Glycyl lysine isopeptide (Lys-Gly) (interchain with G-Cter in SUMO2) cross-links involve residues Lys-203, Lys-231, Lys-266, Lys-274, Lys-278, Lys-279, Lys-311, and Lys-335. The C2H2-type 4; degenerate zinc finger occupies 221 to 244; the sequence is IHCKRCLFMPKSYEALVQHVIEDH. Residue Arg-348 is modified to Asymmetric dimethylarginine. Residues 354–361 form a neuroprotective peptide (NAP) region; that stretch reads NAPVSIPQ. The disordered stretch occupies residues 360–439; that stretch reads PQQSQSVKQL…PAATGPPPSN (80 aa). Residues Lys-367 and Lys-408 each participate in a glycyl lysine isopeptide (Lys-Gly) (interchain with G-Cter in SUMO2) cross-link. Positions 393-423 are enriched in polar residues; that stretch reads SLQTANTSSLPPGQVKSPSVSQSQASRVLGQ. Residues Ser-409 and Ser-413 each carry the phosphoserine modification. Lys-427 participates in a covalent cross-link: Glycyl lysine isopeptide (Lys-Gly) (interchain with G-Cter in SUMO2). Positions 427–438 are enriched in pro residues; the sequence is KPPPAATGPPPS. The segment at 447–469 adopts a C2H2-type 5; atypical zinc-finger fold; sequence KICTICNELFPENVYSVHFEKEH. 2 C2H2-type zinc fingers span residues 489–510 and 512–535; these read SKCL…MLIH and LSCP…RMVH. Glycyl lysine isopeptide (Lys-Gly) (interchain with G-Cter in SUMO2) cross-links involve residues Lys-600 and Lys-606. Phosphoserine is present on Ser-608. Residues Lys-616, Lys-621, Lys-632, and Lys-658 each participate in a glycyl lysine isopeptide (Lys-Gly) (interchain with G-Cter in SUMO2) cross-link. The C2H2-type 8; atypical zinc finger occupies 622–647; that stretch reads TLCPLCFSILKGPISDALAHHLRERH. The C2H2-type 9; atypical zinc finger occupies 662-686; that stretch reads YKCIHCLGVYTSNMTASTITLHLVH. Residues 691–712 form a disordered region; the sequence is GKTQNGQDKTNAPSRLNQSPGL. The span at 692–710 shows a compositional bias: polar residues; it reads KTQNGQDKTNAPSRLNQSP. Lys-699 is covalently cross-linked (Glycyl lysine isopeptide (Lys-Gly) (interchain with G-Cter in SUMO2)). A Phosphoserine modification is found at Ser-709. Glycyl lysine isopeptide (Lys-Gly) (interchain with G-Cter in SUMO2) cross-links involve residues Lys-716, Lys-728, and Lys-731. Residue Ser-738 is modified to Phosphoserine. A Glycyl lysine isopeptide (Lys-Gly) (interchain with G-Cter in SUMO2) cross-link involves residue Lys-745. The segment at residues 754 to 814 is a DNA-binding region (homeobox); the sequence is LDPKGHEDDS…SNKRKKCVRD (61 aa). Ser-805 bears the Phosphoserine mark. Residues Lys-807, Lys-829, and Lys-835 each participate in a glycyl lysine isopeptide (Lys-Gly) (interchain with G-Cter in SUMO2) cross-link. The disordered stretch occupies residues 873–1029; sequence DSFSDSFEHL…VQDDTEQLKW (157 aa). 5 positions are modified to phosphoserine: Ser-876, Ser-878, Ser-886, Ser-889, and Ser-905. Residues Lys-914, Lys-929, and Lys-936 each participate in a glycyl lysine isopeptide (Lys-Gly) (interchain with G-Cter in SUMO2) cross-link. Positions 922–954 are enriched in basic and acidic residues; sequence ESEKLDQKEEEDGSKYETIHLTEERAKLMHDAS. Residues Ser-954 and Ser-956 each carry the phosphoserine modification. Polar residues predominate over residues 972-982; sequence PSESGPGSRQV. Lys-1017 is covalently cross-linked (Glycyl lysine isopeptide (Lys-Gly) (interchain with G-Cter in SUMO2)). 2 positions are modified to N6-acetyllysine; alternate: Lys-1036 and Lys-1043. Glycyl lysine isopeptide (Lys-Gly) (interchain with G-Cter in SUMO2); alternate cross-links involve residues Lys-1036 and Lys-1043. Positions 1045–1103 are disordered; it reads QSQWENASENAERLPNPQIEWQNSTIDSEDGEQFDSMTDGVADPMHGSLTGVKLSSQQA. At Ser-1072 the chain carries Phosphoserine.

As to quaternary structure, interacts (via N-terminal region) with beta-catenin/CTNNB1 (via the central armadillo domains); interaction is direct and stabilizes CTNNB1 by modulating its phosphorylation by glycogen synthase kinase-3 beta GSK3B.

It is found in the nucleus. The protein localises to the chromosome. Functionally, may be involved in transcriptional regulation. May mediate some of the neuroprotective peptide VIP-associated effects involving normal growth and cancer proliferation. Positively modulates WNT-beta-catenin/CTNN1B signaling, acting by regulating phosphorylation of, and thereby stabilizing, CTNNB1. May be required for neural induction and neuronal differentiation. May be involved in erythroid differentiation. The protein is Activity-dependent neuroprotector homeobox protein (Adnp) of Rattus norvegicus (Rat).